The sequence spans 528 residues: Phosphoenolpyruvate carboxykinase (ATP) (528 aa).

Arg-56, Tyr-192, and Lys-198 together coordinate substrate. ATP is bound by residues Lys-198, His-217, and Gly-233–Thr-241. Residues Lys-198 and His-217 each contribute to the Mn(2+) site. Asp-254 provides a ligand contact to Mn(2+). ATP is bound by residues Glu-282, Arg-319, and Thr-444. Arg-319 is a substrate binding site.

This sequence belongs to the phosphoenolpyruvate carboxykinase (ATP) family. Mn(2+) serves as cofactor.

It localises to the cytoplasm. The catalysed reaction is oxaloacetate + ATP = phosphoenolpyruvate + ADP + CO2. Its pathway is carbohydrate biosynthesis; gluconeogenesis. Functionally, involved in the gluconeogenesis. Catalyzes the conversion of oxaloacetate (OAA) to phosphoenolpyruvate (PEP) through direct phosphoryl transfer between the nucleoside triphosphate and OAA. This chain is Phosphoenolpyruvate carboxykinase (ATP), found in Bacillus cereus (strain AH187).